We begin with the raw amino-acid sequence, 157 residues long: Mediator of RNA polymerase II transcription subunit 22 (157 aa).

It belongs to the Mediator complex subunit 22 family. Component of the Mediator complex.

It localises to the nucleus. Its function is as follows. Component of the Mediator complex, a coactivator involved in the regulated transcription of nearly all RNA polymerase II-dependent genes. Mediator functions as a bridge to convey information from gene-specific regulatory proteins to the basal RNA polymerase II transcription machinery. Mediator is recruited to promoters by direct interactions with regulatory proteins and serves as a scaffold for the assembly of a functional preinitiation complex with RNA polymerase II and the general transcription factors. The protein is Mediator of RNA polymerase II transcription subunit 22 (mdt-22) of Caenorhabditis elegans.